Reading from the N-terminus, the 87-residue chain is Large ribosomal subunit protein bL27c (87 aa).

Residues Met-1–Arg-20 form a disordered region.

The protein belongs to the bacterial ribosomal protein bL27 family.

Its subcellular location is the plastid. The protein resides in the chloroplast. The chain is Large ribosomal subunit protein bL27c from Gracilaria tenuistipitata var. liui (Red alga).